The primary structure comprises 245 residues: UDP-2,3-diacylglucosamine hydrolase (245 aa).

D8, H10, D41, N79, and H114 together coordinate Mn(2+). Residue 79 to 80 (NR) participates in substrate binding. Residues D122, S160, K164, K167, and H195 each coordinate substrate. Mn(2+) contacts are provided by H195 and H197.

Belongs to the LpxH family. Requires Mn(2+) as cofactor.

It is found in the cell inner membrane. The enzyme catalyses UDP-2-N,3-O-bis[(3R)-3-hydroxytetradecanoyl]-alpha-D-glucosamine + H2O = 2-N,3-O-bis[(3R)-3-hydroxytetradecanoyl]-alpha-D-glucosaminyl 1-phosphate + UMP + 2 H(+). It functions in the pathway glycolipid biosynthesis; lipid IV(A) biosynthesis; lipid IV(A) from (3R)-3-hydroxytetradecanoyl-[acyl-carrier-protein] and UDP-N-acetyl-alpha-D-glucosamine: step 4/6. Hydrolyzes the pyrophosphate bond of UDP-2,3-diacylglucosamine to yield 2,3-diacylglucosamine 1-phosphate (lipid X) and UMP by catalyzing the attack of water at the alpha-P atom. Involved in the biosynthesis of lipid A, a phosphorylated glycolipid that anchors the lipopolysaccharide to the outer membrane of the cell. The sequence is that of UDP-2,3-diacylglucosamine hydrolase from Aromatoleum aromaticum (strain DSM 19018 / LMG 30748 / EbN1) (Azoarcus sp. (strain EbN1)).